A 147-amino-acid chain; its full sequence is uncharacterized protein (147 aa).

Residues 1–137 form the HTH marR-type domain; that stretch reads MRDNTIGSLI…LYELMTKVHK (137 aa). The segment at residues 53 to 76 is a DNA-binding region (H-T-H motif); it reads QMELAEKVTVTQGGISRMLTRLEK.

This is an uncharacterized protein from Bacillus cereus (strain ATCC 10987 / NRS 248).